The sequence spans 274 residues: MGTLSVNQNKLQKRIRRLAGEAITDFNMIEDGDKVMVCLSGGKDSYTMLDVLLYLQKVAPIKFEIVAVNMDQKQPGFPEHVLPAYLESIGVAYHIIEKDTYSVVKEKIPEGKTTCSLCSRLRRGTLYTYADEIGATKMALGHHRDDILETFFLNMFYGGTLKAMPPKLLSDDGRNVVIRPLAYCAEADIEAYSQLKEFPIIPCNLCGSQENLQRQVVKEMLQEWERKSPGRVEIMFRALQNVHPSQLADRNLFDFKSLKIDDSATPRFLDVMSL.

A PP-loop motif motif is present at residues 40-45 (SGGKDS). Residues cysteine 115, cysteine 118, and cysteine 206 each contribute to the [4Fe-4S] cluster site.

This sequence belongs to the TtcA family. As to quaternary structure, homodimer. The cofactor is Mg(2+). It depends on [4Fe-4S] cluster as a cofactor.

It localises to the cytoplasm. The catalysed reaction is cytidine(32) in tRNA + S-sulfanyl-L-cysteinyl-[cysteine desulfurase] + AH2 + ATP = 2-thiocytidine(32) in tRNA + L-cysteinyl-[cysteine desulfurase] + A + AMP + diphosphate + H(+). The protein operates within tRNA modification. Functionally, catalyzes the ATP-dependent 2-thiolation of cytidine in position 32 of tRNA, to form 2-thiocytidine (s(2)C32). The sulfur atoms are provided by the cysteine/cysteine desulfurase (IscS) system. This is tRNA-cytidine(32) 2-sulfurtransferase from Ectopseudomonas mendocina (strain ymp) (Pseudomonas mendocina).